A 358-amino-acid polypeptide reads, in one-letter code: Peptide chain release factor 1 (358 aa).

Residue glutamine 235 is modified to N5-methylglutamine. The disordered stretch occupies residues 284–309 (KVESERSASRKSQVGSGDRSERIRTY).

Belongs to the prokaryotic/mitochondrial release factor family. Methylated by PrmC. Methylation increases the termination efficiency of RF1.

The protein resides in the cytoplasm. In terms of biological role, peptide chain release factor 1 directs the termination of translation in response to the peptide chain termination codons UAG and UAA. The protein is Peptide chain release factor 1 of Bartonella tribocorum (strain CIP 105476 / IBS 506).